Here is a 431-residue protein sequence, read N- to C-terminus: Evolutionarily conserved signaling intermediate in Toll pathway, mitochondrial (431 aa).

The transit peptide at 1–48 (MSWVQATLLARGLCRAWGGTCGAALTGTSISQVPRRLPRGLHCSAAAH) directs the protein to the mitochondrion. Residue Lys372 forms a Glycyl lysine isopeptide (Lys-Gly) (interchain with G-Cter in ubiquitin) linkage. A disordered region spans residues 400 to 431 (LQTSSAGLEEPPLPEDHQEEDDNLQRQQQGQS).

Belongs to the ECSIT family. In terms of assembly, interacts with MAP3K1, SMAD4 and TRAF6. Interacts with SMAD1 only after BMP4-treatment. Part of the mitochondrial complex I assembly/MCIA complex that comprises at least the core subunits TMEM126B, NDUFAF1, ECSIT and ACAD9 and complement subunits such as COA1 and TMEM186. Interacts with NDUFAF1. Interacts with ACAD9. Interacts with TRIM59. Interacts with TMEM70 and TMEM242. Interacts (when ubiquitinated) with NF-kappa-B subunits RELA and NFKB1. Interacts with RIGI, IFIT1 and MAVS; these interactions promote RLR-mediated type I IFN induction. Interacts with SQSTM1; this interaction inhibits TLR4 signaling via functional regulation of the TRAF6-ECSIT complex. Interacts with cereblon/CRBN; this interaction inhibits the ubiquitination of ECSIT. Ubiquitinated on Lys-372; leading to translocation in the nucleus together with RELA and NFKB1 and expression of NF-kappa-B-dependent genes.

The protein localises to the cytoplasm. The protein resides in the nucleus. It is found in the mitochondrion. Adapter protein that plays a role in different signaling pathways including TLRs and IL-1 pathways or innate antiviral induction signaling. Plays a role in the activation of NF-kappa-B by forming a signal complex with TRAF6 and TAK1/MAP3K7 to activate TAK1/MAP3K7 leading to activation of IKKs. Once ubiquitinated, interacts with the dissociated RELA and NFKB1 proteins and translocates to the nucleus where it induces NF-kappa-B-dependent gene expression. Plays a role in innate antiviral immune response by bridging the pattern recognition receptors RIGI and MDA5/IFIT1 to the MAVS complex at the mitochondrion. Promotes proteolytic activation of MAP3K1. Involved in the BMP signaling pathway. Required for normal embryonic development. Its function is as follows. As part of the MCIA complex, involved in the assembly of the mitochondrial complex I. This chain is Evolutionarily conserved signaling intermediate in Toll pathway, mitochondrial, found in Homo sapiens (Human).